We begin with the raw amino-acid sequence, 258 residues long: Small ribosomal subunit protein mS40 (258 aa).

The transit peptide at 1 to 35 (MAASILNVLLRRLPGVSPFRGAYGVQVLLQTLCTK) directs the protein to the mitochondrion. The residue at position 49 (Ser-49) is a Phosphoserine. The segment at 223–258 (RLREESGPPPELMPEVPLTAPAEASSTEPGAPQSAL) is disordered.

It belongs to the bacterial ribosomal protein bS18 family. Mitochondrion-specific ribosomal protein mS40 subfamily. Component of the mitochondrial ribosome small subunit (28S) which comprises a 12S rRNA and about 30 distinct proteins.

Its subcellular location is the mitochondrion. This chain is Small ribosomal subunit protein mS40 (MRPS18B), found in Sus scrofa (Pig).